Reading from the N-terminus, the 111-residue chain is Cytochrome c (111 aa).

Alanine 1 carries the N-acetylalanine modification. Heme c contacts are provided by cysteine 22, cysteine 25, and histidine 26. Lysine 80 carries the post-translational modification N6,N6,N6-trimethyllysine. A heme c-binding site is contributed by methionine 88. Lysine 94 carries the N6,N6,N6-trimethyllysine modification.

This sequence belongs to the cytochrome c family. In terms of processing, binds 1 heme c group covalently per subunit.

It localises to the mitochondrion intermembrane space. Functionally, electron carrier protein. The oxidized form of the cytochrome c heme group can accept an electron from the heme group of the cytochrome c1 subunit of cytochrome reductase. Cytochrome c then transfers this electron to the cytochrome oxidase complex, the final protein carrier in the mitochondrial electron-transport chain. The polypeptide is Cytochrome c (Cannabis sativa (Hemp)).